A 151-amino-acid polypeptide reads, in one-letter code: GNKERTFIAVKPDGVQRCIVGEVIKRFEQKGFKLVAMKFLQAPKDLLEKHYCELSDKPFYPKLIKYMSSGPVVAMVWEGLNVVKTGRVMLGETNPADSKPGTIRGDFCIQVGRNIIHGSDSVESAKKEISLWFKREELVEYQNCAQDWIYE.

The ATP site is built by Lys11, Phe59, Arg87, Thr93, Arg104, and Asn114. His117 serves as the catalytic Pros-phosphohistidine intermediate.

It belongs to the NDK family. Homohexamer. The cofactor is Mg(2+).

It catalyses the reaction a 2'-deoxyribonucleoside 5'-diphosphate + ATP = a 2'-deoxyribonucleoside 5'-triphosphate + ADP. It carries out the reaction a ribonucleoside 5'-diphosphate + ATP = a ribonucleoside 5'-triphosphate + ADP. Its function is as follows. Major role in the synthesis of nucleoside triphosphates other than ATP. The ATP gamma phosphate is transferred to the NDP beta phosphate via a ping-pong mechanism, using a phosphorylated active-site intermediate. The protein is Nucleoside diphosphate kinase of Ginglymostoma cirratum (Nurse shark).